Here is a 383-residue protein sequence, read N- to C-terminus: Na(+)/H(+) antiporter NhaA (383 aa).

11 helical membrane passes run L10–P30, L56–I76, I91–S111, G121–G141, L150–F170, S174–N194, V206–A226, P254–S274, I289–F308, G327–F347, and A355–L375.

This sequence belongs to the NhaA Na(+)/H(+) (TC 2.A.33) antiporter family.

Its subcellular location is the cell inner membrane. It catalyses the reaction Na(+)(in) + 2 H(+)(out) = Na(+)(out) + 2 H(+)(in). In terms of biological role, na(+)/H(+) antiporter that extrudes sodium in exchange for external protons. This chain is Na(+)/H(+) antiporter NhaA, found in Francisella tularensis subsp. tularensis (strain SCHU S4 / Schu 4).